The primary structure comprises 390 residues: Probable galacturonosyltransferase-like 9 (390 aa).

The Cytoplasmic segment spans residues 1 to 10; it reads MRLRFPMKSA. A helical; Signal-anchor for type II membrane protein transmembrane segment spans residues 11 to 31; the sequence is VLAFAIFLVFIPLFSVGIRMI. Residues 32–390 are Lumenal-facing; the sequence is PGRLTAVSAT…SELTEDSSFF (359 aa). N205 and N223 each carry an N-linked (GlcNAc...) asparagine glycan.

It belongs to the glycosyltransferase 8 family.

It localises to the golgi apparatus membrane. Its pathway is glycan metabolism; pectin biosynthesis. Its function is as follows. May be involved in pectin and/or xylans biosynthesis in cell walls. In Arabidopsis thaliana (Mouse-ear cress), this protein is Probable galacturonosyltransferase-like 9 (GATL9).